Consider the following 336-residue polypeptide: Urokinase plasminogen activator surface receptor (336 aa).

Residues 1 to 23 (MGHPLLLPLLLLLLHTGVPASWG) form the signal peptide. 3 consecutive UPAR/Ly6 domains span residues 24 to 111 (LRCM…VTFP), 116 to 208 (LECI…LSLA), and 215 to 302 (HRCY…EDIQ). 3 cysteine pairs are disulfide-bonded: Cys-26-Cys-47, Cys-29-Cys-35, and Cys-40-Cys-68. N-linked (GlcNAc...) asparagine glycosylation is present at Asn-75. Intrachain disulfides connect Cys-94–Cys-99, Cys-118–Cys-145, Cys-121–Cys-128, Cys-138–Cys-170, Cys-176–Cys-193, Cys-194–Cys-199, Cys-217–Cys-245, Cys-220–Cys-228, Cys-238–Cys-264, Cys-270–Cys-288, and Cys-289–Cys-294. 2 N-linked (GlcNAc...) asparagine glycosylation sites follow: Asn-195 and Asn-223.

As to quaternary structure, monomer. Interacts (via the UPAR/Ly6 domains) with SRPX2. Interacts with MRC2. Interacts with FAP (seprase); the interaction occurs at the cell surface of invadopodia membrane. Interacts with SORL1 (via N-terminal ectodomain); this interaction decreases PLAUR internalization. The ternary complex composed of PLAUR-PLAU-SERPINE1 also interacts with SORL1.

Its subcellular location is the cell membrane. It is found in the cell projection. It localises to the invadopodium membrane. Functionally, acts as a receptor for urokinase plasminogen activator. Plays a role in localizing and promoting plasmin formation. Mediates the proteolysis-independent signal transduction activation effects of U-PA. It is subject to negative-feedback regulation by U-PA which cleaves it into an inactive form. The chain is Urokinase plasminogen activator surface receptor (PLAUR) from Aotus trivirgatus (Three-striped night monkey).